Consider the following 638-residue polypeptide: Gamma-aminobutyric acid receptor subunit theta (638 aa).

An N-terminal signal peptide occupies residues 1-21 (MGIRGMLRAAALLLLIRTWLA). Over 22 to 267 (ESNGPSPTPK…FQVQREVRSY (246 aa)) the chain is Extracellular. N-linked (GlcNAc...) asparagine glycosylation occurs at asparagine 127. Cysteine 183 and cysteine 197 are disulfide-bonded. Residues 268–288 (LVQVYWPTVLTTILSWISFWM) traverse the membrane as a helical segment. At 289-296 (NYDSSAAR) the chain is on the cytoplasmic side. The chain crosses the membrane as a helical span at residues 297–314 (VTIGLTSILVLTTIDSHM). The Extracellular portion of the chain corresponds to 315–325 (RDKLPHISCIK). The chain crosses the membrane as a helical span at residues 326–346 (AIDIYILVCLFFVFLSLLEYV). At 347–617 (YINYLFFSQV…NRVPKVDRWS (271 aa)) the chain is on the cytoplasmic side. Positions 491–515 (ACDDEDSEESLSSEESHGHGSSHTG) are disordered. Acidic residues predominate over residues 492-502 (CDDEDSEESLS). A helical transmembrane segment spans residues 618 to 638 (RFLFPLSFGLFNVVYWLYHVY).

Belongs to the ligand-gated ion channel (TC 1.A.9) family. Gamma-aminobutyric acid receptor (TC 1.A.9.5) subfamily. GABRQ sub-subfamily. In terms of assembly, heteropentamer, formed by a combination of alpha (GABRA1-6), beta (GABRB1-3), gamma (GABRG1-3), delta (GABRD), epsilon (GABRE), rho (GABRR1-3), pi (GABRP) and theta (GABRQ) chains, each subunit exhibiting distinct physiological and pharmacological properties. Expressed in brain, lung, and spleen.

The protein resides in the postsynaptic cell membrane. The protein localises to the cell membrane. It catalyses the reaction chloride(in) = chloride(out). With respect to regulation, potentiated by etomidate, propofol, pregnanolone and pentobarbital. Functionally, theta subunit of the heteropentameric ligand-gated chloride channel gated by gamma-aminobutyric acid (GABA), a major inhibitory neurotransmitter in the brain. GABA-gated chloride channels, also named GABA(A) receptors (GABAAR), consist of five subunits arranged around a central pore and contain GABA active binding site(s) located at the alpha and beta subunit interfaces. When activated by GABA, GABAARs selectively allow the flow of chloride anions across the cell membrane down their electrochemical gradient. The protein is Gamma-aminobutyric acid receptor subunit theta of Mus musculus (Mouse).